A 122-amino-acid chain; its full sequence is Acidic phospholipase A2 (122 aa).

Intrachain disulfides connect cysteine 26/cysteine 115, cysteine 28/cysteine 44, cysteine 43/cysteine 95, cysteine 49/cysteine 122, cysteine 50/cysteine 88, cysteine 57/cysteine 81, and cysteine 75/cysteine 86. Ca(2+)-binding residues include tyrosine 27, glycine 29, and glycine 31. Histidine 47 is a catalytic residue. Position 48 (aspartate 48) interacts with Ca(2+). Aspartate 89 is a catalytic residue.

Requires Ca(2+) as cofactor. As to expression, expressed by the venom gland.

It is found in the secreted. It catalyses the reaction a 1,2-diacyl-sn-glycero-3-phosphocholine + H2O = a 1-acyl-sn-glycero-3-phosphocholine + a fatty acid + H(+). In terms of biological role, PLA2 catalyzes the calcium-dependent hydrolysis of the 2-acyl groups in 3-sn-phosphoglycerides. This Lachesis stenophrys (Central American bushmaster) protein is Acidic phospholipase A2.